The primary structure comprises 126 residues: S-adenosylmethionine decarboxylase proenzyme (126 aa).

Ser-63 (schiff-base intermediate with substrate; via pyruvic acid) is an active-site residue. Pyruvic acid (Ser); by autocatalysis is present on Ser-63. His-68 functions as the Proton acceptor; for processing activity in the catalytic mechanism. The active-site Proton donor; for catalytic activity is Cys-83.

The protein belongs to the prokaryotic AdoMetDC family. Type 1 subfamily. Heterotetramer of two alpha and two beta chains arranged as a dimer of alpha/beta heterodimers. Requires pyruvate as cofactor. Is synthesized initially as an inactive proenzyme. Formation of the active enzyme involves a self-maturation process in which the active site pyruvoyl group is generated from an internal serine residue via an autocatalytic post-translational modification. Two non-identical subunits are generated from the proenzyme in this reaction, and the pyruvate is formed at the N-terminus of the alpha chain, which is derived from the carboxyl end of the proenzyme. The post-translation cleavage follows an unusual pathway, termed non-hydrolytic serinolysis, in which the side chain hydroxyl group of the serine supplies its oxygen atom to form the C-terminus of the beta chain, while the remainder of the serine residue undergoes an oxidative deamination to produce ammonia and the pyruvoyl group blocking the N-terminus of the alpha chain.

It catalyses the reaction S-adenosyl-L-methionine + H(+) = S-adenosyl 3-(methylsulfanyl)propylamine + CO2. The protein operates within amine and polyamine biosynthesis; S-adenosylmethioninamine biosynthesis; S-adenosylmethioninamine from S-adenosyl-L-methionine: step 1/1. In terms of biological role, catalyzes the decarboxylation of S-adenosylmethionine to S-adenosylmethioninamine (dcAdoMet), the propylamine donor required for the synthesis of the polyamines spermine and spermidine from the diamine putrescine. This chain is S-adenosylmethionine decarboxylase proenzyme, found in Oceanobacillus iheyensis (strain DSM 14371 / CIP 107618 / JCM 11309 / KCTC 3954 / HTE831).